The sequence spans 87 residues: Small ribosomal subunit protein bS20 (87 aa).

Positions 1 to 27 (MANSVQATKRARQAEKHRQHNAGMRAA) are disordered. The span at 9-20 (KRARQAEKHRQH) shows a compositional bias: basic residues.

It belongs to the bacterial ribosomal protein bS20 family.

Its function is as follows. Binds directly to 16S ribosomal RNA. This chain is Small ribosomal subunit protein bS20, found in Hydrogenovibrio crunogenus (strain DSM 25203 / XCL-2) (Thiomicrospira crunogena).